A 134-amino-acid chain; its full sequence is Cell division protein SepF (134 aa).

Belongs to the SepF family. In terms of assembly, homodimer. Interacts with FtsZ.

It localises to the cytoplasm. Functionally, cell division protein that is part of the divisome complex and is recruited early to the Z-ring. Probably stimulates Z-ring formation, perhaps through the cross-linking of FtsZ protofilaments. Its function overlaps with FtsA. In Caldanaerobacter subterraneus subsp. tengcongensis (strain DSM 15242 / JCM 11007 / NBRC 100824 / MB4) (Thermoanaerobacter tengcongensis), this protein is Cell division protein SepF.